The primary structure comprises 34 residues: Turripeptide Pal9a (34 aa).

3 disulfide bridges follow: C3-C17, C8-C19, and C13-C30. A Glutamine amide modification is found at Q34.

In terms of tissue distribution, expressed by the venom duct.

It is found in the secreted. The chain is Turripeptide Pal9a from Polystira albida (White giant-turris).